The following is a 241-amino-acid chain: Probable transcriptional regulatory protein str0195 (241 aa).

Belongs to the TACO1 family. YeeN subfamily.

Its subcellular location is the cytoplasm. In Streptococcus thermophilus (strain CNRZ 1066), this protein is Probable transcriptional regulatory protein str0195.